The sequence spans 63 residues: MAAIKSEVSAMKRYKCRVCGYIYDPEKGEPRTDTPPGTPFEDLPETWRCPSCGAKKKMFKPLD.

A Rubredoxin-like domain is found at 11-62; the sequence is MKRYKCRVCGYIYDPEKGEPRTDTPPGTPFEDLPETWRCPSCGAKKKMFKPL. Residues Cys-16, Cys-19, Cys-49, and Cys-52 each contribute to the Fe cation site.

This sequence belongs to the rubredoxin family. Fe(3+) is required as a cofactor.

In terms of biological role, rubredoxin is a small nonheme, iron protein lacking acid-labile sulfide. Its single Fe, chelated to 4 Cys, functions as an electron acceptor and may also stabilize the conformation of the molecule. The chain is Probable rubredoxin from Methanothermobacter thermautotrophicus (strain ATCC 29096 / DSM 1053 / JCM 10044 / NBRC 100330 / Delta H) (Methanobacterium thermoautotrophicum).